The following is a 238-amino-acid chain: ATP synthase subunit a (238 aa).

The next 5 membrane-spanning stretches (helical) occupy residues 18–38 (LTLL…VFWA), 76–96 (YSLL…LGLF), 114–134 (NLAF…IEGV), 166–186 (SLAI…GLIV), and 193–213 (VYWW…SVFI).

The protein belongs to the ATPase A chain family. As to quaternary structure, F-type ATPases have 2 components, CF(1) - the catalytic core - and CF(0) - the membrane proton channel. CF(1) has five subunits: alpha(3), beta(3), gamma(1), delta(1), epsilon(1). CF(0) has three main subunits: a(1), b(2) and c(9-12). The alpha and beta chains form an alternating ring which encloses part of the gamma chain. CF(1) is attached to CF(0) by a central stalk formed by the gamma and epsilon chains, while a peripheral stalk is formed by the delta and b chains.

The protein localises to the cell membrane. Its function is as follows. Key component of the proton channel; it plays a direct role in the translocation of protons across the membrane. The chain is ATP synthase subunit a from Streptococcus pyogenes serotype M5 (strain Manfredo).